Consider the following 337-residue polypeptide: ERI1 exoribonuclease 3 (337 aa).

An Exonuclease domain is found at 146-320 (FLVLDFEATC…DDCKNIANIM (175 aa)). Mg(2+)-binding residues include Asp150, Glu152, and Asp249. The Proton acceptor role is filled by Glu152. Glu152 contacts AMP. Residue His307 is the Proton acceptor of the active site. Residue His307 participates in AMP binding. Residue Asp312 participates in Mg(2+) binding.

As to quaternary structure, interacts with PRNP. Mg(2+) is required as a cofactor.

This chain is ERI1 exoribonuclease 3 (ERI3), found in Homo sapiens (Human).